Reading from the N-terminus, the 270-residue chain is MNARALYKRPPPVSSSQSEASGKRRTRTLDALGFDNYIICNYRLVFYEMMASKMKDRKKTPVSHKVIEKRRRDRINRCLNELGKTVPMALAKQNSGKLEKAEILEMTVQYLRALHSADFPRGREKGELLTEFANYFHYGYHECMKNLVHYLTTVERMETKDTKYARILAFLQSKVVTEPVFGSLGTISPDPTDLLCQLEYQSPSPTESVFQQSPPGHFSWHSSTRSPTLAYPAMSQHSGYLSPVQGLDHHYMNFIGHNAFSLHNAQHAAL.

Residues 1–24 (MNARALYKRPPPVSSSQSEASGKR) are disordered. In terms of domain architecture, bHLH spans 59-114 (KTPVSHKVIEKRRRDRINRCLNELGKTVPMALAKQNSGKLEKAEILEMTVQYLRAL). The Orange domain maps to 136 to 171 (FHYGYHECMKNLVHYLTTVERMETKDTKYARILAFL).

It belongs to the HEY family.

It localises to the nucleus. Functionally, transcriptional repressor which binds preferentially to the canonical E box sequence 5'-CACGCG-3'. In Danio rerio (Zebrafish), this protein is Hairy and enhancer of split-related protein helt (helt).